The sequence spans 460 residues: Adenosylhomocysteinase (460 aa).

Residues Thr-83, Asp-158, and Glu-184 each contribute to the substrate site. Thr-185–Thr-187 serves as a coordination point for NAD(+). Lys-214 and Asp-218 together coordinate substrate. NAD(+) is bound by residues Asn-219, Gly-248–Gly-253, Glu-271, Ile-327–His-329, and Asn-373.

The protein belongs to the adenosylhomocysteinase family. NAD(+) is required as a cofactor.

The protein localises to the cytoplasm. The enzyme catalyses S-adenosyl-L-homocysteine + H2O = L-homocysteine + adenosine. It participates in amino-acid biosynthesis; L-homocysteine biosynthesis; L-homocysteine from S-adenosyl-L-homocysteine: step 1/1. Its function is as follows. May play a key role in the regulation of the intracellular concentration of adenosylhomocysteine. The polypeptide is Adenosylhomocysteinase (Bdellovibrio bacteriovorus (strain ATCC 15356 / DSM 50701 / NCIMB 9529 / HD100)).